Reading from the N-terminus, the 403-residue chain is Tripartite motif-containing protein 59 (403 aa).

The RING-type zinc-finger motif lies at 10–60; sequence CPICYSIFEDPRVLPCSHTFCRNCLENVLQASGNFYIWRPLRIPLKCPNCR. Residues 92–134 form a B box-type zinc finger; it reads PDVVTCPEHYRQPLNVYCLLDKKLVCGHCLTIGQHHGHPIDDL. Positions 97, 100, 120, and 126 each coordinate Zn(2+). The stretch at 163 to 246 forms a coiled coil; that stretch reads LIEKLEEQKC…TITTSLQDES (84 aa). Residues 329–349 form a helical membrane-spanning segment; that stretch reads ILNIAIVSLISVILMLILLFN.

This sequence belongs to the TRIM/RBCC family. As to quaternary structure, interacts with ECSIT. As to expression, moderately expressed in the spleen, brain and heart and very highly expressed in the testis.

It localises to the endoplasmic reticulum membrane. It catalyses the reaction S-ubiquitinyl-[E2 ubiquitin-conjugating enzyme]-L-cysteine + [acceptor protein]-L-lysine = [E2 ubiquitin-conjugating enzyme]-L-cysteine + N(6)-ubiquitinyl-[acceptor protein]-L-lysine.. It participates in protein modification; protein ubiquitination. E3 ubiquitin ligase involved in different processes such as development and immune response. Serves as a negative regulator for innate immune signaling pathways by suppressing RLR-induced activation of IRF3/7 and NF-kappa-B via interaction with adapter ECSIT. Regulates autophagy through modulating both the transcription and the ubiquitination of BECN1. On the one hand, regulates the transcription of BECN1 through negatively modulating the NF-kappa-B pathway. On the other hand, regulates TRAF6-mediated 'Lys-63'-linked ubiquitination of BECN1, thus affecting the formation of the BECN1-PIK3C3 complex. In addition, mediates 'Lys-48'-linked ubiquitination of TRAF6 and thereby promotes TRAF6 proteasomal degradation. Also acts as a critical regulator for early embryo development from blastocyst stage to gastrula through modulating F-actin assembly and WASH1 'Lys-63'-linked ubiquitination. The chain is Tripartite motif-containing protein 59 (Trim59) from Mus musculus (Mouse).